Here is a 163-residue protein sequence, read N- to C-terminus: Cyanate hydratase (163 aa).

Catalysis depends on residues arginine 103, glutamate 106, and serine 129.

It belongs to the cyanase family.

The enzyme catalyses cyanate + hydrogencarbonate + 3 H(+) = NH4(+) + 2 CO2. In terms of biological role, catalyzes the reaction of cyanate with bicarbonate to produce ammonia and carbon dioxide. The polypeptide is Cyanate hydratase (Ajellomyces dermatitidis (strain ER-3 / ATCC MYA-2586) (Blastomyces dermatitidis)).